Consider the following 284-residue polypeptide: Acetyl-coenzyme A carboxylase carboxyl transferase subunit beta (284 aa).

The region spanning 27-284 is the CoA carboxyltransferase N-terminal domain; it reads LMTKCPSCKY…ELHDGGVRHV (258 aa). Zn(2+) contacts are provided by Cys31, Cys34, Cys50, and Cys52. A C4-type zinc finger spans residues 31-52; sequence CPSCKYMHYTKQLNENHKVCDC.

This sequence belongs to the AccD/PCCB family. Acetyl-CoA carboxylase is a heterohexamer composed of biotin carboxyl carrier protein (AccB), biotin carboxylase (AccC) and two subunits each of ACCase subunit alpha (AccA) and ACCase subunit beta (AccD). Zn(2+) is required as a cofactor.

The protein resides in the cytoplasm. It catalyses the reaction N(6)-carboxybiotinyl-L-lysyl-[protein] + acetyl-CoA = N(6)-biotinyl-L-lysyl-[protein] + malonyl-CoA. It participates in lipid metabolism; malonyl-CoA biosynthesis; malonyl-CoA from acetyl-CoA: step 1/1. Functionally, component of the acetyl coenzyme A carboxylase (ACC) complex. Biotin carboxylase (BC) catalyzes the carboxylation of biotin on its carrier protein (BCCP) and then the CO(2) group is transferred by the transcarboxylase to acetyl-CoA to form malonyl-CoA. This Exiguobacterium sp. (strain ATCC BAA-1283 / AT1b) protein is Acetyl-coenzyme A carboxylase carboxyl transferase subunit beta.